The following is a 110-amino-acid chain: Protein OPG154 (110 aa).

This sequence belongs to the orthopoxvirus OPG154 protein family. As to quaternary structure, homohexamers, covalently linked. Interacts with OPG144 and OPG153.

The protein resides in the virion. Structural protein involved in the envelopment of mature virion (MV) to form the wrapped virion (WV). The wrapping consists of the addition of Golgi membranes to the mature virion. Participates in mature virion (MV) movement within the infected cell. May play an indirect role in MV-cell fusion. The protein is Protein OPG154 (OPG154) of Homo sapiens (Human).